The chain runs to 332 residues: Fructose-1,6-bisphosphatase class 1 (332 aa).

Residues E94, D116, L118, and D119 each contribute to the Mg(2+) site. Substrate contacts are provided by residues 119-122 (DGSS), N211, Y239, 257-259 (YLY), and K269. Mg(2+) is bound at residue E275.

This sequence belongs to the FBPase class 1 family. Homotetramer. Mg(2+) serves as cofactor.

Its subcellular location is the cytoplasm. It catalyses the reaction beta-D-fructose 1,6-bisphosphate + H2O = beta-D-fructose 6-phosphate + phosphate. It participates in carbohydrate biosynthesis; Calvin cycle. This is Fructose-1,6-bisphosphatase class 1 from Synechococcus sp. (strain JA-3-3Ab) (Cyanobacteria bacterium Yellowstone A-Prime).